We begin with the raw amino-acid sequence, 266 residues long: MRLIPLNQAEQVGAWSAQHIVNRINEFNPTADRPFVLGLPTGGTPLNTYKKLIELYKADKVSFKNVVTFNMDEYIGLDTNHPESYRTFMFENFFNHVDIQEENINLLNGNTDNHEEECQRYEDKIKSYGRINLFMGGVGNDGHIAFNEPASSLASRTRIKTLTEDTRIANSRFFDGDIAQVPKYALTIGVGTLLDSAEIMILITGHNKALALQAAVEGSVNHMWTVSALQIHPKSVIVCDEASQQELKVKTVKYFKELEAENIKHV.

Asp72 serves as the catalytic Proton acceptor; for enolization step. The For ring-opening step role is filled by Asp141. His143 (proton acceptor; for ring-opening step) is an active-site residue. The active-site For ring-opening step is Glu148.

This sequence belongs to the glucosamine/galactosamine-6-phosphate isomerase family. NagB subfamily. Homohexamer.

It carries out the reaction alpha-D-glucosamine 6-phosphate + H2O = beta-D-fructose 6-phosphate + NH4(+). It participates in amino-sugar metabolism; N-acetylneuraminate degradation; D-fructose 6-phosphate from N-acetylneuraminate: step 5/5. Its activity is regulated as follows. Allosterically activated by N-acetylglucosamine 6-phosphate (GlcNAc6P). Functionally, catalyzes the reversible isomerization-deamination of glucosamine 6-phosphate (GlcN6P) to form fructose 6-phosphate (Fru6P) and ammonium ion. In Aliivibrio salmonicida (strain LFI1238) (Vibrio salmonicida (strain LFI1238)), this protein is Glucosamine-6-phosphate deaminase.